The sequence spans 296 residues: tRNA-cytidine(32) 2-sulfurtransferase (296 aa).

A PP-loop motif motif is present at residues 72–77 (SGGKDS). [4Fe-4S] cluster is bound by residues Cys147, Cys150, and Cys238.

Belongs to the TtcA family. As to quaternary structure, homodimer. Requires Mg(2+) as cofactor. [4Fe-4S] cluster serves as cofactor.

The protein resides in the cytoplasm. The enzyme catalyses cytidine(32) in tRNA + S-sulfanyl-L-cysteinyl-[cysteine desulfurase] + AH2 + ATP = 2-thiocytidine(32) in tRNA + L-cysteinyl-[cysteine desulfurase] + A + AMP + diphosphate + H(+). It functions in the pathway tRNA modification. Its function is as follows. Catalyzes the ATP-dependent 2-thiolation of cytidine in position 32 of tRNA, to form 2-thiocytidine (s(2)C32). The sulfur atoms are provided by the cysteine/cysteine desulfurase (IscS) system. The polypeptide is tRNA-cytidine(32) 2-sulfurtransferase (Sinorhizobium fredii (strain NBRC 101917 / NGR234)).